The primary structure comprises 515 residues: Putative ribose/galactose/methyl galactoside import ATP-binding protein (515 aa).

ABC transporter domains are found at residues 25 to 261 and 268 to 515; these read LEVL…VGRE and LREK…SGLN. 57-64 contacts ATP; sequence GENGAGKS.

This sequence belongs to the ABC transporter superfamily. Carbohydrate importer 2 (CUT2) (TC 3.A.1.2) family.

It localises to the cell inner membrane. It carries out the reaction D-ribose(out) + ATP + H2O = D-ribose(in) + ADP + phosphate + H(+). The enzyme catalyses D-galactose(out) + ATP + H2O = D-galactose(in) + ADP + phosphate + H(+). Functionally, part of an ABC transporter complex involved in carbohydrate import. Could be involved in ribose, galactose and/or methyl galactoside import. Responsible for energy coupling to the transport system. The sequence is that of Putative ribose/galactose/methyl galactoside import ATP-binding protein from Pseudomonas fluorescens (strain ATCC BAA-477 / NRRL B-23932 / Pf-5).